The chain runs to 367 residues: Aminomethyltransferase (367 aa).

It belongs to the GcvT family. In terms of assembly, the glycine cleavage system is composed of four proteins: P, T, L and H.

The catalysed reaction is N(6)-[(R)-S(8)-aminomethyldihydrolipoyl]-L-lysyl-[protein] + (6S)-5,6,7,8-tetrahydrofolate = N(6)-[(R)-dihydrolipoyl]-L-lysyl-[protein] + (6R)-5,10-methylene-5,6,7,8-tetrahydrofolate + NH4(+). Its function is as follows. The glycine cleavage system catalyzes the degradation of glycine. This is Aminomethyltransferase from Shouchella clausii (strain KSM-K16) (Alkalihalobacillus clausii).